A 173-amino-acid polypeptide reads, in one-letter code: Alpha-crystallin A chain (173 aa).

The residue at position 1 (Met1) is an N-acetylmethionine. Residues 52–162 (LFRTVLESGI…SHNERPIPVS (111 aa)) form the sHSP domain. Positions 100, 102, 107, and 154 each coordinate Zn(2+). The tract at residues 144–173 (PKVQSNTDPSHNERPIPVSREEKPTSAPPS) is disordered. Over residues 153-167 (SHNERPIPVSREEKP) the composition is skewed to basic and acidic residues. A glycan (O-linked (GlcNAc) serine) is linked at Ser162.

The protein belongs to the small heat shock protein (HSP20) family. As to quaternary structure, heteropolymer composed of three CRYAA and one CRYAB subunits. Inter-subunit bridging via zinc ions enhances stability, which is crucial as there is no protein turn over in the lens. Can also form homodimers and homotetramers (dimers of dimers) which serve as the building blocks of homooligomers. Within homooligomers, the zinc-binding motif is created from residues of 3 different molecules. His-100 and Glu-102 from one molecule are ligands of the zinc ion, and His-107 and His-154 residues from additional molecules complete the site with tetrahedral coordination geometry.

The protein localises to the cytoplasm. It localises to the nucleus. Contributes to the transparency and refractive index of the lens. May act as a chaperone, preventing aggregation of various proteins under a wide range of stress conditions. The chain is Alpha-crystallin A chain (CRYAA) from Tupinambis teguixin (Golden tegu).